The sequence spans 204 residues: Transmembrane protein 253 (204 aa).

Helical transmembrane passes span 33 to 53 (LVLA…TISV), 62 to 82 (LVTA…IITL), 96 to 116 (MMIS…IEVM), and 138 to 158 (LSAE…LFLL). Residues 184-204 (EEVSGLENGPVVASTGNRTDE) are disordered.

The protein localises to the membrane. This chain is Transmembrane protein 253 (Tmem253), found in Mus musculus (Mouse).